A 203-amino-acid polypeptide reads, in one-letter code: Translation machinery-associated protein 16 (203 aa).

Residues 1–39 (MPKAPKGKSAGREKKVIHPYSRKAAQITREAHKQEKKEK) are disordered. An ADP-ribosylserine modification is found at S9. Over residues 29–39 (REAHKQEKKEK) the composition is skewed to basic and acidic residues.

It belongs to the TMA16 family. Associates with pre-60S ribosomal particles.

The protein localises to the nucleus. Involved in the biogenesis of the 60S ribosomal subunit in the nucleus. The chain is Translation machinery-associated protein 16 (TMA16) from Homo sapiens (Human).